Reading from the N-terminus, the 975-residue chain is Chromosome transmission fidelity protein 18 homolog (975 aa).

Disordered regions lie at residues 30-83 (EGAS…KRQV) and 114-141 (SEEM…DLAE). At T51 the chain carries Phosphothreonine. Over residues 58 to 77 (RGDAASSPAPAASVGSSQGG) the composition is skewed to low complexity. Residue S64 is modified to Phosphoserine. The span at 122–136 (PPDSSPTDITPPPSP) shows a compositional bias: pro residues. Position 225 is a phosphoserine (S225). 2 disordered regions span residues 246-276 (SDTL…GQDA) and 320-346 (RPSR…KWKS). 374–381 (GPPGLGKT) serves as a coordination point for ATP. Residues 858–896 (ASARVENSPQVDGSPPGLEGLLGGIGEKGVHRPAPRNHE) are disordered. S871 carries the post-translational modification Phosphoserine.

Belongs to the activator 1 small subunits family. CTF18 subfamily. In terms of assembly, component of the CTF18-RFC complex, which consists of CTF18, CTF8, DCC1, RFC2, RFC3, RFC4 and RFC5. During assembly of the CTF18-RFC complex, CTF18 may first assemble into a subcomplex with RFC2, RFC3, RFC4 and RFC5. CTF18 then interacts directly with CTF8, which in turn interacts with DCC1. The CTF18-RFC complex associates with PCNA and with DNA polymerase POLH. The CTF18-RFC complex does not interact with the Rad9/Rad1/Hus1 complex. CTF18 interacts with SMC1A and RAD21. Interacts with DDX11.

It is found in the nucleus. In terms of biological role, chromosome cohesion factor involved in sister chromatid cohesion and fidelity of chromosome transmission. Component of one of the cell nuclear antigen loader complexes, CTF18-replication factor C (CTF18-RFC), which consists of CTF18, CTF8, DCC1, RFC2, RFC3, RFC4 and RFC5. The CTF18-RFC complex binds to single-stranded and primed DNAs and has weak ATPase activity that is stimulated by the presence of primed DNA, replication protein A (RPA) and by proliferating cell nuclear antigen (PCNA). The CTF18-RFC complex catalyzes the ATP-dependent loading of PCNA onto primed and gapped DNA. Interacts with and stimulates DNA polymerase POLH. During DNA repair synthesis, involved in loading DNA polymerase POLE at the sites of local damage. The polypeptide is Chromosome transmission fidelity protein 18 homolog (CHTF18) (Homo sapiens (Human)).